The primary structure comprises 578 residues: Vi polysaccharide biosynthesis protein VipC/TviE (578 aa).

The protein operates within glycan metabolism; Vi-antigen biosynthesis. Its pathway is capsule biogenesis; capsule polysaccharide biosynthesis. The chain is Vi polysaccharide biosynthesis protein VipC/TviE (vipC) from Salmonella typhi.